We begin with the raw amino-acid sequence, 511 residues long: Rab proteins geranylgeranyltransferase component A (511 aa).

Belongs to the Rab GDI family.

The protein resides in the cytoplasm. Its subcellular location is the perinuclear region. It localises to the cytoskeleton. The protein localises to the spindle pole. Its function is as follows. Binds unprenylated Rab proteins, presents it to the catalytic component B, and remains bound to it after the geranylgeranyl transfer reaction. The component A is thought to be regenerated by transferring its prenylated Rab to a protein acceptor. This is Rab proteins geranylgeranyltransferase component A from Drosophila melanogaster (Fruit fly).